A 132-amino-acid polypeptide reads, in one-letter code: Proline-rich protein sgp2 (132 aa).

A signal peptide spans 1–20; that stretch reads MKYCFVFFVTLICLIANCSA. Disordered regions lie at residues 23 to 62 and 87 to 132; these read EGDK…SNSR and GASV…LGLP. Residues 36-47 are compositionally biased toward basic and acidic residues; the sequence is KQIERASDKTSE. Residues 51–62 are compositionally biased toward polar residues; that stretch reads GNTNAQGDSNSR. The span at 91–105 shows a compositional bias: low complexity; it reads PQLPDLPTTPSLPDM.

It is found in the secreted. This Glossina morsitans morsitans (Savannah tsetse fly) protein is Proline-rich protein sgp2 (sgp2).